A 461-amino-acid chain; its full sequence is tRNA-splicing endonuclease subunit Sen2 (461 aa).

Disordered regions lie at residues 140-176 (GAEQ…TSSP) and 190-210 (GDPA…DVKE). Polar residues predominate over residues 144-176 (TGDSCDTVCPNTENTELSGQSSTDTGNIATSSP). The segment covering 201–210 (KEQEPADVKE) has biased composition (basic and acidic residues). Residues Tyr365, His373, and Lys412 contribute to the active site.

It belongs to the tRNA-intron endonuclease family. As to quaternary structure, tRNA splicing endonuclease is a heterotetramer composed of SEN2, SEN15, SEN34/LENG5 and SEN54.

The protein resides in the nucleus. The enzyme catalyses pretRNA = a 3'-half-tRNA molecule with a 5'-OH end + a 5'-half-tRNA molecule with a 2',3'-cyclic phosphate end + an intron with a 2',3'-cyclic phosphate and a 5'-hydroxyl terminus.. Constitutes one of the two catalytic subunit of the tRNA-splicing endonuclease complex, a complex responsible for identification and cleavage of the splice sites in pre-tRNA. It cleaves pre-tRNA at the 5'- and 3'-splice sites to release the intron. The products are an intron and two tRNA half-molecules bearing 2',3'-cyclic phosphate and 5'-OH termini. There are no conserved sequences at the splice sites, but the intron is invariably located at the same site in the gene, placing the splice sites an invariant distance from the constant structural features of the tRNA body. Probably carries the active site for 5'-splice site cleavage. The tRNA splicing endonuclease is also involved in mRNA processing via its association with pre-mRNA 3'-end processing factors, establishing a link between pre-tRNA splicing and pre-mRNA 3'-end formation, suggesting that the endonuclease subunits function in multiple RNA-processing events. In Gallus gallus (Chicken), this protein is tRNA-splicing endonuclease subunit Sen2 (TSEN2).